The following is a 266-amino-acid chain: Lipooligosaccharide biosynthesis protein lic2B (266 aa).

The protein belongs to the glycosyltransferase 25 family.

Involved in extracellular lipooligosaccharide (LOS) biosynthesis and virulence expression. Involved in the synthesis of the oligosaccharide moiety of the LOS molecule by adding GalNAc. In Haemophilus influenzae, this protein is Lipooligosaccharide biosynthesis protein lic2B (lic2B).